We begin with the raw amino-acid sequence, 274 residues long: MSNTTDADAKHPQSNILVEETVVYDNVFTTPLDKAARFSFDEQVVACFPDMIRRSVPGYGQMLAMLPIFAKRHCQAGQVNAEGKRVSRVYDLGCSLGGATMALLNEKGGFGKEELQIKAVDISPAMTQKAEVLLQQNYPEHDIEVITADIRGFELEPCDMVILNLTLQFLPPADRTQVLQSIYNALNDGGILVLTEKTHTGDEQDDAWLVERYYDFKRANGYSELEISGKRNALENVLITDTLDQHHQRLAEVGFNRSLTWFQFLNFASMVAFK.

Residues Y59, 93–95 (GCS), 149–150 (DI), N164, and R231 each bind S-adenosyl-L-methionine.

It belongs to the class I-like SAM-binding methyltransferase superfamily. Cx-SAM synthase family. In terms of assembly, homodimer.

It carries out the reaction prephenate + S-adenosyl-L-methionine = carboxy-S-adenosyl-L-methionine + 3-phenylpyruvate + H2O. Its function is as follows. Catalyzes the conversion of S-adenosyl-L-methionine (SAM) to carboxy-S-adenosyl-L-methionine (Cx-SAM). The protein is Carboxy-S-adenosyl-L-methionine synthase of Psychrobacter sp. (strain PRwf-1).